Here is an 825-residue protein sequence, read N- to C-terminus: Fibrous sheath CABYR-binding protein (825 aa).

Disordered regions lie at residues 1–43 (MVGK…SYSA) and 113–139 (QDVE…RTGY). A compositionally biased stretch (polar residues) spans 21–40 (KSSSPKATHRIGNTSGSKGS). Phosphoserine is present on serine 160. 3 disordered regions span residues 168-232 (SRPD…LLED), 244-718 (QEGS…DKHS), and 732-751 (GEAS…EDEA). The span at 200 to 220 (PATNSNEEIGQKNISRTSFTQ) shows a compositional bias: polar residues. The segment covering 277–290 (ATAKAEPRPAEETH) has biased composition (basic and acidic residues). Low complexity-rich tracts occupy residues 348–357 (AEILPPSAEE) and 398–407 (PLPAEGALEE). Pro residues predominate over residues 610-676 (VQPPPAEEAP…PAEVQPPPAE (67 aa)).

In terms of assembly, interacts with CABYR. Interacts with ROPN1 and ROPN1L; the interaction increases upon spermatozoa capacitation conditions. In terms of processing, phosphorylated by PKA upon spermatozoa capacitation conditions.

The protein localises to the cell projection. It localises to the cilium. The protein resides in the flagellum. Functionally, may be involved in the later stages of fibrous sheath biogenesis and spermatozoa capacitation. Inhibits ROPN1 and ROPN1L SUMOylation. Binds calcium. In Homo sapiens (Human), this protein is Fibrous sheath CABYR-binding protein (FSCB).